Reading from the N-terminus, the 421-residue chain is UPF0229 protein lpp2857 (421 aa).

The tract at residues 83–110 (IAGDRIKRPSGGGAGGAGGNASDSGEGE) is disordered. Gly residues predominate over residues 92–101 (SGGGAGGAGG).

This sequence belongs to the UPF0229 family.

In Legionella pneumophila (strain Paris), this protein is UPF0229 protein lpp2857.